The sequence spans 100 residues: Small ribosomal subunit protein uS14c (100 aa).

The span at 28 to 45 (KKEIKKVPSLSEKMEIHG) shows a compositional bias: basic and acidic residues. Residues 28-59 (KKEIKKVPSLSEKMEIHGKLQSPPRNSAPTRL) are disordered.

It belongs to the universal ribosomal protein uS14 family. In terms of assembly, part of the 30S ribosomal subunit.

It localises to the plastid. Its subcellular location is the chloroplast. In terms of biological role, binds 16S rRNA, required for the assembly of 30S particles. This is Small ribosomal subunit protein uS14c from Nandina domestica (Heavenly bamboo).